Here is a 334-residue protein sequence, read N- to C-terminus: Serine/Arginine-related protein 53 (334 aa).

A compositionally biased stretch (basic and acidic residues) spans 1-13 (MGRRSSDTEEESR). 3 disordered regions span residues 1–179 (MGRR…HLPP), 198–220 (DEAL…EDQA), and 246–290 (RSSK…SIPT). Positions 14-24 (SKRKKKHRRRS) are enriched in basic residues. Positions 44–62 (PRSDSRSWSRDRQLRSHSY) are enriched in basic and acidic residues. Residues 78 to 118 (SRRKRSRSRSRGRGKPYRVQRSRSKSRTRRSRSRPRPRSHS) are compositionally biased toward basic residues. Composition is skewed to basic and acidic residues over residues 132–166 (RSRD…KRGD), 198–218 (DEAL…KEED), and 247–256 (SSKDVKKAVE). The stretch at 180 to 236 (AEQAKARLQLVLEAAAKADEALKAKERSEEEAKRRKEEDQATLVEQVKRVKEIEAIE) forms a coiled coil. A compositionally biased stretch (low complexity) spans 265 to 278 (AASGPASAAAEPPS).

In terms of assembly, interacts (via Arg/Ser-rich domain) with LUC7L3, RBM39 and RSF1. Phosphorylated.

Its subcellular location is the nucleus. The protein localises to the nucleus speckle. The protein resides in the cytoplasm. Its function is as follows. Plays a role in pre-mRNA splicing. Involved in both constitutive and alternative pre-mRNA splicing. May have a role in the recognition of the 3' splice site during the second step of splicing. The chain is Serine/Arginine-related protein 53 (Rsrc1) from Mus musculus (Mouse).